The primary structure comprises 184 residues: Protein Syd (184 aa).

It belongs to the Syd family.

It is found in the cell inner membrane. Functionally, interacts with the SecY protein in vivo. May bind preferentially to an uncomplexed state of SecY, thus functioning either as a chelating agent for excess SecY in the cell or as a regulatory factor that negatively controls the translocase function. The chain is Protein Syd from Edwardsiella ictaluri (strain 93-146).